Reading from the N-terminus, the 262-residue chain is MFRTVPKTTLLAPIQRRTLLNGNYPKAYPEHVPLTCLGRAVLAVGSGFGTFFDSRRGDLVATLGEATAQPYFIYKLREQMLKDPTGRRLLREQPRMTSKSLDLDKLRNMKVGSIGRTYVEWLDKEGVSPDTRAQVRYIDDPECAYVMQRYRESHDFYHALTGLPIIMEGELALKAFEWANTGLPMSGLGMVLTPLKFKPKQRKRYFDVYLPWALYNGFRSKPVINVYWEEVLEKDAEELRRDLGIEQPPDLRQMKKDMAKKK.

The Zn(2+) site is built by H154, D155, H158, and E170. The disordered stretch occupies residues 243-262 (LGIEQPPDLRQMKKDMAKKK). The span at 252–262 (RQMKKDMAKKK) shows a compositional bias: basic and acidic residues.

It belongs to the COQ4 family. Component of a multi-subunit COQ enzyme complex, composed of at least COQ3, COQ4, COQ5, COQ6, COQ7 and COQ9. Zn(2+) is required as a cofactor.

The protein resides in the mitochondrion inner membrane. It catalyses the reaction a 4-hydroxy-3-methoxy-5-(all-trans-polyprenyl)benzoate + H(+) = a 2-methoxy-6-(all-trans-polyprenyl)phenol + CO2. The protein operates within cofactor biosynthesis; ubiquinone biosynthesis. In terms of biological role, lyase that catalyzes the C1-decarboxylation of 4-hydroxy-3-methoxy-5-(all-trans-polyprenyl)benzoic acid into 2-methoxy-6-(all-trans-polyprenyl)phenol during ubiquinone biosynthesis. The chain is Ubiquinone biosynthesis protein COQ4, mitochondrial from Yarrowia lipolytica (strain CLIB 122 / E 150) (Yeast).